The chain runs to 218 residues: NAD(P)H-quinone oxidoreductase subunit I (218 aa).

4Fe-4S ferredoxin-type domains are found at residues 55–84 and 95–124; these read GRIH…VDWV and RNYS…MTEE. 8 residues coordinate [4Fe-4S] cluster: Cys-64, Cys-67, Cys-70, Cys-74, Cys-104, Cys-107, Cys-110, and Cys-114. The interval 169 to 218 is disordered; the sequence is MDPHDVPANQPRAGQLPAEALKSLSLQQESVQGDEGESLQDASDQDQPSG. Over residues 208–218 the composition is skewed to polar residues; that stretch reads QDASDQDQPSG.

This sequence belongs to the complex I 23 kDa subunit family. In terms of assembly, NDH-1 is composed of at least 11 different subunits. [4Fe-4S] cluster is required as a cofactor.

It localises to the cellular thylakoid membrane. The enzyme catalyses a plastoquinone + NADH + (n+1) H(+)(in) = a plastoquinol + NAD(+) + n H(+)(out). It catalyses the reaction a plastoquinone + NADPH + (n+1) H(+)(in) = a plastoquinol + NADP(+) + n H(+)(out). Its function is as follows. NDH-1 shuttles electrons from an unknown electron donor, via FMN and iron-sulfur (Fe-S) centers, to quinones in the respiratory and/or the photosynthetic chain. The immediate electron acceptor for the enzyme in this species is believed to be plastoquinone. Couples the redox reaction to proton translocation, and thus conserves the redox energy in a proton gradient. The polypeptide is NAD(P)H-quinone oxidoreductase subunit I (Prochlorococcus marinus (strain MIT 9313)).